The following is a 478-amino-acid chain: RNA exonuclease 3 (478 aa).

The Exonuclease domain occupies 320–465 (VLALDCEMAF…EDAIAAMDVI (146 aa)).

The protein belongs to the REXO1/REXO3 family.

The protein localises to the cytoplasm. It is found in the nucleus. Its function is as follows. 3' to 5' exoribonuclease required for proper 3' end maturation of MRP RNA and of the U5L snRNA. The chain is RNA exonuclease 3 (REX3) from Kluyveromyces lactis (strain ATCC 8585 / CBS 2359 / DSM 70799 / NBRC 1267 / NRRL Y-1140 / WM37) (Yeast).